Reading from the N-terminus, the 200-residue chain is MVCWLRSRWRPVADNDYRSAPGTEPFVPDFDTGAHSQRFLSLAGQQDRAGKSWPGSTPKPQEDPVGVAPSASVEVLGSEPAATLAHSVTVPGRYTYLKWWKFVLVVLGVWIGAGEVGLSLFYWWYHTLDKTAAVFVVLVYVVACTVGGLILALVPGRPLITALSLGVMSGPFASVAAAAPLYGYYYCERMSHCLVGVIPY.

The disordered stretch occupies residues 47 to 67; it reads DRAGKSWPGSTPKPQEDPVGV. 3 helical membrane passes run 102-122, 134-154, and 159-179; these read FVLV…SLFY, VFVV…LALV, and LITA…AAAA.

The protein resides in the cell membrane. The sequence is that of Protein Rv0461 from Mycobacterium tuberculosis (strain ATCC 25618 / H37Rv).